The sequence spans 310 residues: Porphobilinogen deaminase (310 aa).

C242 carries the S-(dipyrrolylmethanemethyl)cysteine modification.

This sequence belongs to the HMBS family. As to quaternary structure, monomer. The cofactor is dipyrromethane.

It catalyses the reaction 4 porphobilinogen + H2O = hydroxymethylbilane + 4 NH4(+). It functions in the pathway porphyrin-containing compound metabolism; protoporphyrin-IX biosynthesis; coproporphyrinogen-III from 5-aminolevulinate: step 2/4. Functionally, tetrapolymerization of the monopyrrole PBG into the hydroxymethylbilane pre-uroporphyrinogen in several discrete steps. The polypeptide is Porphobilinogen deaminase (Shewanella baltica (strain OS223)).